The following is a 78-amino-acid chain: MSRVCELTGARANNGMAVSHSHIRTKKLQQVNLQKRRLWWQEGKKWINIKISTKALKSIQKVGLDKVAKTNGVDLNKF.

Belongs to the bacterial ribosomal protein bL28 family.

The sequence is that of Large ribosomal subunit protein bL28 from Prochlorococcus marinus (strain MIT 9515).